Reading from the N-terminus, the 166-residue chain is V-type proton ATPase subunit c4 (166 aa).

Topologically, residues 1-13 (MASSGFSGDETAP) are lumenal. A helical transmembrane segment spans residues 14–34 (FFGFLGAAAALVFSCMGAAYG). Residues 35–56 (TAKSGVGVASMGVMRPELVMKS) lie on the Cytoplasmic side of the membrane. The helical transmembrane segment at 57–77 (IVPVVMAGVLGIYGLIIAVII) threads the bilayer. The Lumenal segment spans residues 78-96 (STGINPKAKSYYLFDGYAH). A helical membrane pass occupies residues 97-118 (LSSGLACGLAGLSAGMAIGIVG). At 119-130 (DAGVRANAQQPK) the chain is on the cytoplasmic side. The helical transmembrane segment at 131–156 (LFVGMILILIFAEALALYGLIVGIIL) threads the bilayer. Topologically, residues 157 to 166 (SSRAGQSRAE) are lumenal.

Belongs to the V-ATPase proteolipid subunit family. In terms of assembly, V-ATPase is a heteromultimeric enzyme composed of a peripheral catalytic V1 complex (components A to H) attached to an integral membrane V0 proton pore complex (components: a, c, c'', d and e). The proteolipid components c and c'' are present as a hexameric ring that forms the proton-conducting pore. Interacts with APD2.

The protein localises to the vacuole membrane. Its function is as follows. Proton-conducting pore forming subunit of the membrane integral V0 complex of vacuolar ATPase. V-ATPase is responsible for acidifying a variety of intracellular compartments in eukaryotic cells. This is V-type proton ATPase subunit c4 (VHA-c4) from Arabidopsis thaliana (Mouse-ear cress).